The sequence spans 123 residues: Small ribosomal subunit protein bS16 (123 aa).

Residues 79–123 (AGIAKRPSRNNPTKGEPGKKAQERLALAKQAEEEAAAKAAEAASE) are disordered.

The protein belongs to the bacterial ribosomal protein bS16 family.

This Brucella melitensis biotype 2 (strain ATCC 23457) protein is Small ribosomal subunit protein bS16.